Here is a 316-residue protein sequence, read N- to C-terminus: Ribosomal RNA small subunit methyltransferase H (316 aa).

S-adenosyl-L-methionine is bound by residues 36–38 (GGH), D56, F83, D104, and Q111.

It belongs to the methyltransferase superfamily. RsmH family.

The protein resides in the cytoplasm. It carries out the reaction cytidine(1402) in 16S rRNA + S-adenosyl-L-methionine = N(4)-methylcytidine(1402) in 16S rRNA + S-adenosyl-L-homocysteine + H(+). Its function is as follows. Specifically methylates the N4 position of cytidine in position 1402 (C1402) of 16S rRNA. This Protochlamydia amoebophila (strain UWE25) protein is Ribosomal RNA small subunit methyltransferase H.